A 437-amino-acid polypeptide reads, in one-letter code: Septin-7 (437 aa).

S2 is modified (N-acetylserine). The residue at position 30 (Y30) is a Phosphotyrosine. The region spanning 47–316 (RGFEFTLMVV…ENYRSRKLAA (270 aa)) is the Septin-type G domain. Positions 47–317 (RGFEFTLMVV…NYRSRKLAAV (271 aa)) are interaction with SEPTIN12. Positions 57 to 64 (GESGLGKS) are G1 motif. Residue 57–64 (GESGLGKS) coordinates GTP. S77 bears the Phosphoserine mark. GTP contacts are provided by residues T90, G116, and 195–203 (KADTLTPEE). A G3 motif region spans residues 113 to 116 (DTPG). A G4 motif region spans residues 194–197 (AKAD). At T228 the chain carries Phosphothreonine. Residues G250 and R265 each contribute to the GTP site. Residues 332–433 (TKSPLAQMEE…SRTLEKNKKK (102 aa)) adopt a coiled-coil conformation. S334 is subject to Phosphoserine. K373 bears the N6-acetyllysine mark. Positions 378 to 410 (ELQRRHEQMKKNLEAQHKELEEKRRQFEDEKAN) are enriched in basic and acidic residues. The disordered stretch occupies residues 378 to 437 (ELQRRHEQMKKNLEAQHKELEEKRRQFEDEKANWEAQQRILEQQNSSRTLEKNKKKGKIF). S424 is subject to Phosphoserine. Residue T426 is modified to Phosphothreonine.

Belongs to the TRAFAC class TrmE-Era-EngA-EngB-Septin-like GTPase superfamily. Septin GTPase family. As to quaternary structure, septins polymerize into heterooligomeric protein complexes that form filaments, and associate with cellular membranes, actin filaments and microtubules. GTPase activity is required for filament formation. Filaments are assembled from asymmetrical heterotrimers, composed of SEPTIN2, SEPTIN6 and SEPTIN7 that associate head-to-head to form a hexameric unit. Within the trimer, directly interacts with SEPTIN6, while interaction with SEPTIN2 seems indirect. In the absence of SEPTIN6, forms homodimers. Interacts directly with CENPE and links CENPE to septin filaments composed of SEPTIN2, SEPTIN6 and SEPTIN7. Interacts with SEPTIN5, SEPTIN8, SEPTIN9 and SEPTIN11. Component of a septin core octameric complex consisting of SEPTIN12, SEPTIN7, SEPTIN6 and SEPTIN2 or SEPTIN4 in the order 12-7-6-2-2-6-7-12 or 12-7-6-4-4-6-7-12 and located in the sperm annulus; the SEPTIN12:SEPTIN7 association is mediated by the respective GTP-binding domains.

Its subcellular location is the cytoplasm. The protein localises to the chromosome. The protein resides in the centromere. It is found in the kinetochore. It localises to the cytoskeleton. Its subcellular location is the spindle. The protein localises to the cleavage furrow. The protein resides in the midbody. It is found in the cilium axoneme. It localises to the cell projection. Its subcellular location is the cilium. The protein localises to the flagellum. In terms of biological role, filament-forming cytoskeletal GTPase. Required for normal organization of the actin cytoskeleton. Required for normal progress through mitosis. Involved in cytokinesis. Required for normal association of CENPE with the kinetochore. Plays a role in ciliogenesis and collective cell movements. Forms a filamentous structure with SEPTIN12, SEPTIN6, SEPTIN2 and probably SEPTIN4 at the sperm annulus which is required for the structural integrity and motility of the sperm tail during postmeiotic differentiation. The polypeptide is Septin-7 (Bos taurus (Bovine)).